The sequence spans 357 residues: DNA replication and repair protein RecF (357 aa).

30 to 37 contacts ATP; it reads GANGSGKT.

Belongs to the RecF family.

It is found in the cytoplasm. The RecF protein is involved in DNA metabolism; it is required for DNA replication and normal SOS inducibility. RecF binds preferentially to single-stranded, linear DNA. It also seems to bind ATP. The polypeptide is DNA replication and repair protein RecF (Klebsiella pneumoniae subsp. pneumoniae (strain ATCC 700721 / MGH 78578)).